Reading from the N-terminus, the 370-residue chain is Proline-rich protein 5-like (370 aa).

Ser-28 carries the phosphoserine modification. The tract at residues 327–370 (PTFPPPHRQCSSEPSILDSPDEMELEDVASGSQEDSELNCASLS) is disordered.

The protein belongs to the PROTOR family. As to quaternary structure, interacts with the mammalian target of rapamycin complex 2 (mTORC2) which contains MTOR, MLST8, PRR5, RICTOR, MAPKAP1 and DEPTOR. Interacts with RFFL. Interacts (via C-terminus) with ZFP36 (via C-terminus); this interaction may accelerate ZFP36-mediated mRNA decay during stress. Interacts with RICTOR. Ubiquitinated. Ubiquitination by RFFL promotes proteasomal degradation of PRR5L thereby modifying the substrate-specific activity of the mTORC2 complex. Ubiquitination by RFFL is stimulated by LPA/lysophosphatidic acid.

Associates with the mTORC2 complex that regulates cellular processes including survival and organization of the cytoskeleton. Regulates the activity of the mTORC2 complex in a substrate-specific manner preventing for instance the specific phosphorylation of PKCs and thereby controlling cell migration. Plays a role in the stimulation of ZFP36-mediated mRNA decay of several ZFP36-associated mRNAs, such as TNF-alpha and GM-CSF, in response to stress. Required for ZFP36 localization to cytoplasmic stress granule (SG) and P-body (PB) in response to stress. The chain is Proline-rich protein 5-like (Prr5l) from Rattus norvegicus (Rat).